A 499-amino-acid polypeptide reads, in one-letter code: Glutamyl-tRNA(Gln) amidotransferase subunit A (499 aa).

Residues K76 and S151 each act as charge relay system in the active site. S175 acts as the Acyl-ester intermediate in catalysis.

Belongs to the amidase family. GatA subfamily. As to quaternary structure, heterotrimer of A, B and C subunits.

The catalysed reaction is L-glutamyl-tRNA(Gln) + L-glutamine + ATP + H2O = L-glutaminyl-tRNA(Gln) + L-glutamate + ADP + phosphate + H(+). Allows the formation of correctly charged Gln-tRNA(Gln) through the transamidation of misacylated Glu-tRNA(Gln) in organisms which lack glutaminyl-tRNA synthetase. The reaction takes place in the presence of glutamine and ATP through an activated gamma-phospho-Glu-tRNA(Gln). This chain is Glutamyl-tRNA(Gln) amidotransferase subunit A, found in Rhodopirellula baltica (strain DSM 10527 / NCIMB 13988 / SH1).